Consider the following 280-residue polypeptide: Probable endonuclease 4 (280 aa).

9 residues coordinate Zn(2+): histidine 69, histidine 109, glutamate 145, aspartate 179, histidine 182, histidine 216, aspartate 229, histidine 231, and glutamate 261.

It belongs to the AP endonuclease 2 family. Zn(2+) is required as a cofactor.

The catalysed reaction is Endonucleolytic cleavage to 5'-phosphooligonucleotide end-products.. Functionally, endonuclease IV plays a role in DNA repair. It cleaves phosphodiester bonds at apurinic or apyrimidinic (AP) sites, generating a 3'-hydroxyl group and a 5'-terminal sugar phosphate. The protein is Probable endonuclease 4 of Pelodictyon phaeoclathratiforme (strain DSM 5477 / BU-1).